The following is a 255-amino-acid chain: Ribosomal RNA small subunit methyltransferase G 2 (255 aa).

Positions 90, 95, and 155 each coordinate S-adenosyl-L-methionine. The span at 233–245 (EDEGEELLMDELS) shows a compositional bias: acidic residues. The interval 233 to 255 (EDEGEELLMDELSNEEKRRWAKY) is disordered. Over residues 246 to 255 (NEEKRRWAKY) the composition is skewed to basic and acidic residues.

Belongs to the methyltransferase superfamily. RNA methyltransferase RsmG family.

It localises to the cytoplasm. The enzyme catalyses guanosine(527) in 16S rRNA + S-adenosyl-L-methionine = N(7)-methylguanosine(527) in 16S rRNA + S-adenosyl-L-homocysteine. Functionally, specifically methylates the N7 position of guanine in position 527 of 16S rRNA. The sequence is that of Ribosomal RNA small subunit methyltransferase G 2 from Bdellovibrio bacteriovorus (strain ATCC 15356 / DSM 50701 / NCIMB 9529 / HD100).